A 763-amino-acid chain; its full sequence is U3 small nucleolar RNA-associated protein 25 homolog (763 aa).

The interval 1–164 (MGKRRSRGRS…SQKSSEEFTD (164 aa)) is disordered. Promotes p53/TP53 degradation stretches follow at residues 1 to 190 (MGKR…SQRT) and 580 to 642 (VQLP…KKEE). Phosphoserine is present on serine 10. Basic and acidic residues predominate over residues 25–43 (RDFGEEHPFYDRVSKKEVK). Phosphoserine is present on residues serine 52, serine 60, and serine 64. Residues 54–70 (DSSHSESESESEQEHVS) are compositionally biased toward basic and acidic residues. Residues 84–119 (EEEEEEEEEEEEEEEDKEEVDDSAVGDSEMNGEDGG) are compositionally biased toward acidic residues. The interval 643–704 (LNFTHICEYT…YELPTYAHFY (62 aa)) is represses p53/TP53 degradation.

It belongs to the UTP25 family. As to quaternary structure, interacts with CAPN3; the interaction is required for CAPN3 translocation to the nucleolus. In terms of processing, phosphorylated. Phosphorylation is required to promote p53/TP53 degradation in the nucleolus which promotes cell cycle progression and liver development.

It is found in the nucleus. The protein localises to the nucleolus. Component of the ribosomal small subunit processome for the biogenesis of ribosomes, functions in pre-ribosomal RNA (pre-rRNA) processing. Essential for embryonic development in part through the regulation of p53 pathway. Controls the expansion growth of digestive organs and liver. Also involved in the sympathetic neuronal development. Mediates, with CAPN3, the proteasome-independent degradation of p53/TP53. The polypeptide is U3 small nucleolar RNA-associated protein 25 homolog (Rattus norvegicus (Rat)).